Consider the following 330-residue polypeptide: Methionine import ATP-binding protein MetN (330 aa).

The ABC transporter domain maps to 2–241 (IAFRGVSKVY…PSTRLHQLCF (240 aa)). Residue 38-45 (GQSGAGKS) coordinates ATP.

Belongs to the ABC transporter superfamily. Methionine importer (TC 3.A.1.24) family. In terms of assembly, the complex is composed of two ATP-binding proteins (MetN), two transmembrane proteins (MetI) and a solute-binding protein (MetQ).

The protein resides in the cell inner membrane. The catalysed reaction is L-methionine(out) + ATP + H2O = L-methionine(in) + ADP + phosphate + H(+). It carries out the reaction D-methionine(out) + ATP + H2O = D-methionine(in) + ADP + phosphate + H(+). Functionally, part of the ABC transporter complex MetNIQ involved in methionine import. Responsible for energy coupling to the transport system. The sequence is that of Methionine import ATP-binding protein MetN from Myxococcus xanthus (strain DK1622).